The sequence spans 161 residues: Small ribosomal subunit protein uS9 (161 aa).

This sequence belongs to the universal ribosomal protein uS9 family.

The chain is Small ribosomal subunit protein uS9 from Bartonella henselae (strain ATCC 49882 / DSM 28221 / CCUG 30454 / Houston 1) (Rochalimaea henselae).